A 273-amino-acid chain; its full sequence is Shikimate dehydrogenase (NADP(+)) (273 aa).

Residues 18 to 20 (SKS) and Thr-65 contribute to the shikimate site. Catalysis depends on Lys-69, which acts as the Proton acceptor. NADP(+) is bound at residue Glu-81. Positions 90 and 105 each coordinate shikimate. Residues 130–134 (GAGGA), 154–159 (NRTHSK), and Met-217 each bind NADP(+). Tyr-219 serves as a coordination point for shikimate. Gly-240 provides a ligand contact to NADP(+).

It belongs to the shikimate dehydrogenase family. As to quaternary structure, homodimer.

It carries out the reaction shikimate + NADP(+) = 3-dehydroshikimate + NADPH + H(+). It participates in metabolic intermediate biosynthesis; chorismate biosynthesis; chorismate from D-erythrose 4-phosphate and phosphoenolpyruvate: step 4/7. Functionally, involved in the biosynthesis of the chorismate, which leads to the biosynthesis of aromatic amino acids. Catalyzes the reversible NADPH linked reduction of 3-dehydroshikimate (DHSA) to yield shikimate (SA). The protein is Shikimate dehydrogenase (NADP(+)) of Herminiimonas arsenicoxydans.